The chain runs to 182 residues: Dynactin subunit 5 (182 aa).

At Met1 the chain carries N-acetylmethionine.

The protein belongs to the dynactin subunits 5/6 family. Dynactin subunit 5 subfamily. As to quaternary structure, subunit of dynactin, a multiprotein complex part of a tripartite complex with dynein and a adapter, such as BICDL1, BICD2 or HOOK3. The dynactin complex is built around ACTR1A/ACTB filament and consists of an actin-related filament composed of a shoulder domain, a pointed end and a barbed end. Its length is defined by its flexible shoulder domain. The soulder is composed of 2 DCTN1 subunits, 4 DCTN2 and 2 DCTN3. The 4 DCNT2 (via N-terminus) bind the ACTR1A filament and act as molecular rulers to determine the length. The pointed end is important for binding dynein-dynactin cargo adapters. Consists of 4 subunits: ACTR10, DCNT4, DCTN5 and DCTN6. Within the complex DCTN6 forms a heterodimer with DCTN5. The barbed end is composed of a CAPZA1:CAPZB heterodimers, which binds ACTR1A/ACTB filament and dynactin and stabilizes dynactin. Interacts with N4BP2L1.

Its subcellular location is the cytoplasm. The protein localises to the cytoskeleton. The protein resides in the chromosome. It is found in the centromere. It localises to the kinetochore. In terms of biological role, part of the dynactin complex that activates the molecular motor dynein for ultra-processive transport along microtubules. This Pongo abelii (Sumatran orangutan) protein is Dynactin subunit 5 (DCTN5).